Consider the following 308-residue polypeptide: Ribosomal RNA small subunit methyltransferase H (308 aa).

S-adenosyl-L-methionine-binding positions include 36 to 38, Asp-55, Phe-86, Asp-103, and Gln-110; that span reads GGH.

This sequence belongs to the methyltransferase superfamily. RsmH family.

It localises to the cytoplasm. The enzyme catalyses cytidine(1402) in 16S rRNA + S-adenosyl-L-methionine = N(4)-methylcytidine(1402) in 16S rRNA + S-adenosyl-L-homocysteine + H(+). Specifically methylates the N4 position of cytidine in position 1402 (C1402) of 16S rRNA. The protein is Ribosomal RNA small subunit methyltransferase H of Helicobacter pylori (strain G27).